The chain runs to 493 residues: NADH-ubiquinone oxidoreductase 51 kDa subunit, mitochondrial (493 aa).

The transit peptide at 1–27 (MLSRTAAPTKASARTLSRAAAEQCRTF) directs the protein to the mitochondrion. An NAD(+)-binding site is contributed by 96 to 105 (GRGGAGFPSG). FMN is bound at residue 212–259 (GAGAYVCGEETSLIESLEGKPGKPRLKPPFPAAVGLFGCPSTVANVET). Residues Cys-391, Cys-394, Cys-397, and Cys-437 each contribute to the [4Fe-4S] cluster site.

Belongs to the complex I 51 kDa subunit family. In terms of assembly, complex I is composed of about 40 different subunits. This is a component of the flavoprotein-sulfur (FP) fragment of the enzyme. FMN is required as a cofactor. It depends on [4Fe-4S] cluster as a cofactor.

The protein resides in the mitochondrion inner membrane. It catalyses the reaction a ubiquinone + NADH + 5 H(+)(in) = a ubiquinol + NAD(+) + 4 H(+)(out). Core subunit of the mitochondrial membrane respiratory chain NADH dehydrogenase (Complex I) that is believed to belong to the minimal assembly required for catalysis. Complex I functions in the transfer of electrons from NADH to the respiratory chain. The immediate electron acceptor for the enzyme is believed to be ubiquinone. This Neurospora crassa (strain ATCC 24698 / 74-OR23-1A / CBS 708.71 / DSM 1257 / FGSC 987) protein is NADH-ubiquinone oxidoreductase 51 kDa subunit, mitochondrial (nuo-51).